Here is a 359-residue protein sequence, read N- to C-terminus: 3-dehydroquinate synthase (359 aa).

NAD(+) is bound by residues 70-75, 105-109, 129-130, lysine 142, lysine 151, and 169-172; these read DGEQYK, GVIGD, TT, and FYKT. 3 residues coordinate Zn(2+): glutamate 184, histidine 247, and histidine 264.

It belongs to the sugar phosphate cyclases superfamily. Dehydroquinate synthase family. It depends on Co(2+) as a cofactor. The cofactor is Zn(2+). NAD(+) is required as a cofactor.

The protein localises to the cytoplasm. It carries out the reaction 7-phospho-2-dehydro-3-deoxy-D-arabino-heptonate = 3-dehydroquinate + phosphate. It participates in metabolic intermediate biosynthesis; chorismate biosynthesis; chorismate from D-erythrose 4-phosphate and phosphoenolpyruvate: step 2/7. In terms of biological role, catalyzes the conversion of 3-deoxy-D-arabino-heptulosonate 7-phosphate (DAHP) to dehydroquinate (DHQ). The polypeptide is 3-dehydroquinate synthase (Francisella tularensis subsp. tularensis (strain FSC 198)).